Reading from the N-terminus, the 436-residue chain is UDP-N-acetylmuramoylalanine--D-glutamate ligase (436 aa).

Residue 112 to 118 (GSNGKST) coordinates ATP.

Belongs to the MurCDEF family.

Its subcellular location is the cytoplasm. It carries out the reaction UDP-N-acetyl-alpha-D-muramoyl-L-alanine + D-glutamate + ATP = UDP-N-acetyl-alpha-D-muramoyl-L-alanyl-D-glutamate + ADP + phosphate + H(+). Its pathway is cell wall biogenesis; peptidoglycan biosynthesis. Cell wall formation. Catalyzes the addition of glutamate to the nucleotide precursor UDP-N-acetylmuramoyl-L-alanine (UMA). This Photorhabdus laumondii subsp. laumondii (strain DSM 15139 / CIP 105565 / TT01) (Photorhabdus luminescens subsp. laumondii) protein is UDP-N-acetylmuramoylalanine--D-glutamate ligase.